The following is a 523-amino-acid chain: Polypyrimidine tract-binding protein 3 (523 aa).

The tract at residues 1–25 (MNNSTSAGVYANGNDNKKFKGDRPP) is disordered. RRM domains lie at 30–114 (RVLH…NLPN), 153–229 (LRII…FSKL), and 329–403 (SVLL…LSKH). Residue K36 forms a Glycyl lysine isopeptide (Lys-Gly) (interchain with G-Cter in SUMO2) linkage. Position 98 is a phosphotyrosine (Y98). T109 carries the post-translational modification Phosphothreonine. K187 is covalently cross-linked (Glycyl lysine isopeptide (Lys-Gly) (interchain with G-Cter in SUMO2)). Position 394 is an N6-acetyllysine (K394). Residues 406-426 (VQLPREGQEDQGLTKDFSNSP) are disordered. A Phosphoserine modification is found at S425. The RRM 4 domain maps to 446–521 (ATLHLSNIPP…HHLRVSFSKS (76 aa)).

In terms of assembly, interacts with THBS4 (via the acidic amphipathic C-terminus). As to expression, detected specifically in spleen, thymus, lungs, and bone marrow.

Functionally, RNA-binding protein that mediates pre-mRNA alternative splicing regulation. Plays a role in the regulation of cell proliferation, differentiation and migration. Positive regulator of EPO-dependent erythropoiesis. Participates in cell differentiation regulation by repressing tissue-specific exons. Promotes Fas exon 6 skipping. Binds RNA, preferentially to both poly(G) and poly(U). The chain is Polypyrimidine tract-binding protein 3 (Ptbp3) from Rattus norvegicus (Rat).